The primary structure comprises 509 residues: Protein WHAT'S THIS FACTOR 1 homolog, chloroplastic (509 aa).

The N-terminal 56 residues, 1–56, are a transit peptide targeting the chloroplast; that stretch reads MDAKLLLLPFPSPPATLHHHPPPPKSLFLGASLPLLHPPPPLRLLRPGAPRRLAVV. One can recognise a PORR domain in the interval 65-393; sequence KEIPFDNVIQ…LKEKMRALVA (329 aa). Disordered stretches follow at residues 402–431 and 444–509; these read VPAT…DEDE and SGGK…RERW. Over residues 461 to 474 the composition is skewed to acidic residues; it reads ENDDSPPDFEDDDG.

Its subcellular location is the plastid. The protein resides in the chloroplast. Its function is as follows. RNA-binding protein involved in group II intron splicing. Binds specific group II introns and promotes their splicing. Functions in the context of a heterodimer with the ribonuclease III domain-containing protein RNC1. This Oryza sativa subsp. japonica (Rice) protein is Protein WHAT'S THIS FACTOR 1 homolog, chloroplastic.